The chain runs to 347 residues: Protein RecA (347 aa).

64 to 71 (GPESSGKT) is an ATP binding site.

Belongs to the RecA family.

The protein resides in the cytoplasm. Its function is as follows. Can catalyze the hydrolysis of ATP in the presence of single-stranded DNA, the ATP-dependent uptake of single-stranded DNA by duplex DNA, and the ATP-dependent hybridization of homologous single-stranded DNAs. It interacts with LexA causing its activation and leading to its autocatalytic cleavage. This is Protein RecA from Bartonella tribocorum (strain CIP 105476 / IBS 506).